The primary structure comprises 311 residues: Probable dihydroorotate dehydrogenase A (fumarate) (311 aa).

Substrate-binding positions include Lys45, Asn69–Leu73, and Asn128. Lys45 to Thr46 is an FMN binding site. Asn128 serves as a coordination point for FMN. Cys131 serves as the catalytic Nucleophile. Residues Lys165 and Val193 each coordinate FMN. Asn194 to Ser195 is a substrate binding site. Residues Gly220, Gly248 to Gly249, and Gly270 to Thr271 each bind FMN.

It belongs to the dihydroorotate dehydrogenase family. Type 1 subfamily. In terms of assembly, homodimer. Requires FMN as cofactor.

It localises to the cytoplasm. It catalyses the reaction (S)-dihydroorotate + fumarate = orotate + succinate. Its pathway is pyrimidine metabolism; UMP biosynthesis via de novo pathway. Its function is as follows. Catalyzes the conversion of dihydroorotate to orotate with fumarate as the electron acceptor. The protein is Probable dihydroorotate dehydrogenase A (fumarate) (pyrDA) of Streptococcus pneumoniae (strain ATCC BAA-255 / R6).